Reading from the N-terminus, the 229-residue chain is Urease accessory protein UreG (229 aa).

Position 24-31 (24-31 (GPVGSGKT)) interacts with GTP.

This sequence belongs to the SIMIBI class G3E GTPase family. UreG subfamily. In terms of assembly, homodimer. UreD, UreF and UreG form a complex that acts as a GTP-hydrolysis-dependent molecular chaperone, activating the urease apoprotein by helping to assemble the nickel containing metallocenter of UreC. The UreE protein probably delivers the nickel.

Its subcellular location is the cytoplasm. Its function is as follows. Facilitates the functional incorporation of the urease nickel metallocenter. This process requires GTP hydrolysis, probably effectuated by UreG. The chain is Urease accessory protein UreG from Albidiferax ferrireducens (strain ATCC BAA-621 / DSM 15236 / T118) (Rhodoferax ferrireducens).